A 1169-amino-acid chain; its full sequence is Protein MBD-R2 (1169 aa).

The segment at 5–59 (CCVANCPSTSRLLEHNGVTYHSFPLDPIIRAIWIKNSRISLERQITKSVLVCSRH) adopts a THAP-type zinc-finger fold. 3 disordered regions span residues 99–122 (RALQ…STND), 140–211 (SAER…KYSN), and 347–394 (AEEG…CAPQ). Over residues 107 to 122 (EGTTETPGNAQSSTND) the composition is skewed to polar residues. The segment covering 140 to 160 (SAERKATEEGKTGKAADDVKN) has biased composition (basic and acidic residues). Residues 190 to 202 (PAPGSASSSNSPL) are compositionally biased toward low complexity. Positions 353-363 (KSPTPVGTPVS) are enriched in polar residues. In terms of domain architecture, MBD spans 445-514 (KPTVIVQDWR…DVYDFSIHRR (70 aa)). The interval 527 to 565 (GYNPQPPPKPRPMDVSMNSTLDQSITSQHSLPSTPMPVK) is disordered. Over residues 542-559 (SMNSTLDQSITSQHSLPS) the composition is skewed to polar residues. The C2H2-type zinc-finger motif lies at 640–665 (YVCPREDCAKTYRKEDFLLIHIRHYH). A disordered region spans residues 714–890 (QDLQQSRSFK…INAALAPPPA (177 aa)). Over residues 726–742 (SVSATATSSTPSDITPT) the composition is skewed to low complexity. Residues 774 to 784 (PTQSFNPSLSR) are compositionally biased toward polar residues. The span at 798–810 (SGSRKSNRQRSQR) shows a compositional bias: basic residues. 2 stretches are compositionally biased toward polar residues: residues 853–862 (AATTPISSID) and 869–881 (SVST…QTDI).

In terms of assembly, component of the non-specific lethal (NLS) histone acetyltransferase complex at least composed of mof, nls1, dgt1/NSL2, Rcd1/NSL3, Rcd5/MCRS2, MBD-R2 and wds.

The protein localises to the nucleus. Its subcellular location is the chromosome. Functionally, component of the non-specific lethal (NLS) complex, a multiprotein complex that promotes expression of housekeeping genes on X chromosome and autosomes. The protein is Protein MBD-R2 of Drosophila melanogaster (Fruit fly).